A 480-amino-acid chain; its full sequence is Bindin (480 aa).

The N-terminal stretch at 1–20 (MDSQVLPLILLIIVFAASSA) is a signal peptide. A propeptide spanning residues 21–247 (HGHFPHRTNQ…GEMRAERQRR (227 aa)) is cleaved from the precursor. A disordered region spans residues 161–211 (AEMRHRRSAKDDDVNKRASPRKGSSPAGKKVQIMEQDAGKGDAHNEKEVVK). Basic and acidic residues predominate over residues 197–211 (DAGKGDAHNEKEVVK). A fucose-binding domain region spans residues 377-385 (LRHLRHHSN). Residues 431-451 (GAGAVAGAAMAAGMPPYPGGA) traverse the membrane as a helical segment. The tract at residues 452-480 (QGGMRVGGQPQNPMGGNAYNPMTGYRQQG) is disordered.

This sequence belongs to the bindin family.

It localises to the cytoplasmic vesicle. It is found in the secretory vesicle. The protein resides in the acrosome membrane. Its function is as follows. Species-specific sea urchin sperm protein required for adhesion of sperm to the egg surface during fertilization. Bindin coats the acrosomal process after it is externalized by the acrosome reaction. It binds to sulfated, fucose-containing polysaccharides on the vitelline layer receptor proteoglycans which cover the egg plasma membrane. This Arbacia punctulata (Punctuate sea urchin) protein is Bindin.